The following is a 96-amino-acid chain: Signal recognition particle 19 kDa protein (96 aa).

Belongs to the SRP19 family. In terms of assembly, part of the signal recognition particle protein translocation system, which is composed of SRP and FtsY. Archaeal SRP consists of a 7S RNA molecule of 300 nucleotides and two protein subunits: SRP54 and SRP19.

Its subcellular location is the cytoplasm. Its function is as follows. Involved in targeting and insertion of nascent membrane proteins into the cytoplasmic membrane. Binds directly to 7S RNA and mediates binding of the 54 kDa subunit of the SRP. This chain is Signal recognition particle 19 kDa protein, found in Pyrobaculum arsenaticum (strain DSM 13514 / JCM 11321 / PZ6).